A 255-amino-acid polypeptide reads, in one-letter code: 5'-nucleotidase SurE (255 aa).

D8, D9, S40, and N93 together coordinate a divalent metal cation.

It belongs to the SurE nucleotidase family. A divalent metal cation is required as a cofactor.

It is found in the cytoplasm. It catalyses the reaction a ribonucleoside 5'-phosphate + H2O = a ribonucleoside + phosphate. Its function is as follows. Nucleotidase that shows phosphatase activity on nucleoside 5'-monophosphates. This is 5'-nucleotidase SurE from Bradyrhizobium diazoefficiens (strain JCM 10833 / BCRC 13528 / IAM 13628 / NBRC 14792 / USDA 110).